The sequence spans 258 residues: Probable parvulin-type peptidyl-prolyl cis-trans isomerase (258 aa).

The N-terminal stretch at 1–19 is a signal peptide; sequence MKRIAMLAAACVIAVPAFA. A PpiC domain is found at 127 to 219; that stretch reads KMEYKVRHIL…FGWHVIQVDD (93 aa).

Belongs to the PpiC/parvulin rotamase family.

It carries out the reaction [protein]-peptidylproline (omega=180) = [protein]-peptidylproline (omega=0). The chain is Probable parvulin-type peptidyl-prolyl cis-trans isomerase from Bordetella parapertussis (strain 12822 / ATCC BAA-587 / NCTC 13253).